Consider the following 225-residue polypeptide: Transcription factor MYB1 (225 aa).

HTH myb-type domains lie at 11–67 (LGRV…KPSI) and 68–118 (KRGH…YKKH). 2 DNA-binding regions (H-T-H motif) span residues 39-63 (WKRVPERAGLNRCRKSCRWRWLNYL) and 91-114 (WSLIAAKLPGRTINDVKNYCNTHL).

No interactions with bHLH.

It is found in the nucleus. Activates DODA1 and CYP76AD1 in the betalain red pigment pathway. The polypeptide is Transcription factor MYB1 (Beta vulgaris (Sugar beet)).